Reading from the N-terminus, the 364-residue chain is Peptidyl-prolyl cis-trans isomerase D (364 aa).

One can recognise a PPIase cyclophilin-type domain in the interval 7–170 (YFDITIGNKP…EDAVIAKCGE (164 aa)). 3 TPR repeats span residues 208–241 (ATHLKDIGNTYFKKGDHANAAKKYLKAIRYLNEK), 261–294 (IPCYLNRSMCALKLGEYSECVKVTTTVLEYDSKY), and 301–334 (TKAYFRRGSAKMNTRDFEGAIEDFEKAHEKDPED).

Belongs to the cyclophilin-type PPIase family. PPIase D subfamily.

The protein localises to the cytoplasm. The enzyme catalyses [protein]-peptidylproline (omega=180) = [protein]-peptidylproline (omega=0). Its function is as follows. PPIases accelerate the folding of proteins. It catalyzes the cis-trans isomerization of proline imidic peptide bonds in oligopeptides. This is Peptidyl-prolyl cis-trans isomerase D (cyp12) from Rhizopus delemar (strain RA 99-880 / ATCC MYA-4621 / FGSC 9543 / NRRL 43880) (Mucormycosis agent).